The sequence spans 264 residues: tRNA1(Val) (adenine(37)-N6)-methyltransferase (264 aa).

The protein belongs to the methyltransferase superfamily. tRNA (adenine-N(6)-)-methyltransferase family.

It is found in the cytoplasm. The enzyme catalyses adenosine(37) in tRNA1(Val) + S-adenosyl-L-methionine = N(6)-methyladenosine(37) in tRNA1(Val) + S-adenosyl-L-homocysteine + H(+). Functionally, specifically methylates the adenine in position 37 of tRNA(1)(Val) (anticodon cmo5UAC). The chain is tRNA1(Val) (adenine(37)-N6)-methyltransferase from Shewanella pealeana (strain ATCC 700345 / ANG-SQ1).